The following is a 151-amino-acid chain: Desiccation-related protein PCC27-45 (151 aa).

Belongs to the LEA type 2 family.

This Craterostigma plantagineum (Blue gem) protein is Desiccation-related protein PCC27-45.